We begin with the raw amino-acid sequence, 268 residues long: tRNA (guanine-N(1)-)-methyltransferase (268 aa).

Residues Gly113 and 133–138 contribute to the S-adenosyl-L-methionine site; that span reads IGDYVL. Residues 238–268 are disordered; it reads RCPPDPFAHQGPVYEGDQLERPEGGEQGASR.

The protein belongs to the RNA methyltransferase TrmD family. Homodimer.

It localises to the cytoplasm. It catalyses the reaction guanosine(37) in tRNA + S-adenosyl-L-methionine = N(1)-methylguanosine(37) in tRNA + S-adenosyl-L-homocysteine + H(+). Specifically methylates guanosine-37 in various tRNAs. This chain is tRNA (guanine-N(1)-)-methyltransferase, found in Thermomicrobium roseum (strain ATCC 27502 / DSM 5159 / P-2).